Reading from the N-terminus, the 428-residue chain is Glutamyl-tRNA reductase (428 aa).

Substrate-binding positions include 49–52 (TCNR), Ser-109, 114–116 (EGQ), and Gln-120. Catalysis depends on Cys-50, which acts as the Nucleophile. 189-194 (GAGKMA) serves as a coordination point for NADP(+).

Belongs to the glutamyl-tRNA reductase family. In terms of assembly, homodimer.

The catalysed reaction is (S)-4-amino-5-oxopentanoate + tRNA(Glu) + NADP(+) = L-glutamyl-tRNA(Glu) + NADPH + H(+). Its pathway is porphyrin-containing compound metabolism; protoporphyrin-IX biosynthesis; 5-aminolevulinate from L-glutamyl-tRNA(Glu): step 1/2. It functions in the pathway porphyrin-containing compound metabolism; chlorophyll biosynthesis. In terms of biological role, catalyzes the NADPH-dependent reduction of glutamyl-tRNA(Glu) to glutamate 1-semialdehyde (GSA). This is Glutamyl-tRNA reductase from Rippkaea orientalis (strain PCC 8801 / RF-1) (Cyanothece sp. (strain PCC 8801)).